The following is a 115-amino-acid chain: Phosphoribosyl-AMP cyclohydrolase (115 aa).

A Mg(2+)-binding site is contributed by Asp80. Residue Cys81 coordinates Zn(2+). 2 residues coordinate Mg(2+): Asp82 and Asp84. Residues Cys97 and Cys104 each coordinate Zn(2+).

It belongs to the PRA-CH family. In terms of assembly, homodimer. Mg(2+) is required as a cofactor. It depends on Zn(2+) as a cofactor.

It is found in the cytoplasm. It carries out the reaction 1-(5-phospho-beta-D-ribosyl)-5'-AMP + H2O = 1-(5-phospho-beta-D-ribosyl)-5-[(5-phospho-beta-D-ribosylamino)methylideneamino]imidazole-4-carboxamide. The protein operates within amino-acid biosynthesis; L-histidine biosynthesis; L-histidine from 5-phospho-alpha-D-ribose 1-diphosphate: step 3/9. Its function is as follows. Catalyzes the hydrolysis of the adenine ring of phosphoribosyl-AMP. This chain is Phosphoribosyl-AMP cyclohydrolase, found in Mycobacterium sp. (strain MCS).